Here is a 467-residue protein sequence, read N- to C-terminus: Envelope glycoprotein M (467 aa).

Residues 1–32 are Intravirion-facing; sequence MGRRAPRGSPEAAPGADVAPGARAAWWVWCVQ. The helical transmembrane segment at 33 to 53 threads the bilayer; the sequence is VATFIVSAICVVGLLVLASVF. Residues 54–90 are Virion surface-facing; that stretch reads RDRFPCLYAPATSYAKANATVEVRGGVAVPLRLDTQS. The helical transmembrane segment at 91–111 threads the bilayer; that stretch reads LLATYAITSTLLLAAAVYAAV. Over 112-137 the chain is Intravirion; that stretch reads GAVTSRYERALDAARRLAAARMAMPH. Residues 138 to 158 traverse the membrane as a helical segment; that stretch reads ATLIAGNVCAWLLQITVLLLA. At 159–163 the chain is on the virion surface side; it reads HRISQ. Residues 164–184 form a helical membrane-spanning segment; sequence LAHLIYVLHFACLVYLAAHFC. Topologically, residues 185–220 are intravirion; that stretch reads TRGVLSGTYLRQVHGLIDPAPTHHRIVGPVRAVMTN. Residues 221 to 241 form a helical membrane-spanning segment; that stretch reads ALLLGTLLCTAAAAVSLNTIA. Residues 242-250 lie on the Virion surface side of the membrane; it reads ALNFNFSAP. Residues 251 to 271 form a helical membrane-spanning segment; it reads SMLICLTTLFALLVVSLLLVV. Residues 272 to 280 are Intravirion-facing; it reads EGVLCHYVR. The chain crosses the membrane as a helical span at residues 281–301; that stretch reads VLVGPHLGAIAATGIVGLACE. At 302 to 318 the chain is on the virion surface side; sequence HYHTGGYYVVEQQWPGA. The chain crosses the membrane as a helical span at residues 319–339; sequence QTGVRVALALVAAFALAMAVL. Over 340-467 the chain is Intravirion; that stretch reads RCTRAYLYHR…EPVYSTVRRW (128 aa). A compositionally biased stretch (basic residues) spans 371 to 381; the sequence is RRVRSSMRGSR. Disordered stretches follow at residues 371–395 and 432–459; these read RRVR…AETP and VQRP…AGEP.

This sequence belongs to the herpesviridae glycoprotein M family. In terms of assembly, interacts (via N-terminus) with gN (via N-terminus). The gM-gN heterodimer forms the gCII complex.

The protein localises to the virion membrane. It localises to the host Golgi apparatus. The protein resides in the host trans-Golgi network. It is found in the host endosome membrane. Its subcellular location is the host nucleus inner membrane. Its function is as follows. Envelope glycoprotein important for virion assembly and egress. Plays a role in the correct incorporation of gH-gL into virion membrane. Directs the glycoprotein N (gN) to the host trans-Golgi network. This chain is Envelope glycoprotein M, found in Human herpesvirus 2 (strain HG52) (HHV-2).